A 192-amino-acid polypeptide reads, in one-letter code: GTP cyclohydrolase 1 (192 aa).

Residues Cys-76, His-79, and Cys-148 each coordinate Zn(2+).

It belongs to the GTP cyclohydrolase I family. In terms of assembly, toroid-shaped homodecamer, composed of two pentamers of five dimers.

It carries out the reaction GTP + H2O = 7,8-dihydroneopterin 3'-triphosphate + formate + H(+). It functions in the pathway cofactor biosynthesis; 7,8-dihydroneopterin triphosphate biosynthesis; 7,8-dihydroneopterin triphosphate from GTP: step 1/1. The chain is GTP cyclohydrolase 1 from Carboxydothermus hydrogenoformans (strain ATCC BAA-161 / DSM 6008 / Z-2901).